A 341-amino-acid chain; its full sequence is S-adenosylmethionine:tRNA ribosyltransferase-isomerase (341 aa).

This sequence belongs to the QueA family. As to quaternary structure, monomer.

The protein localises to the cytoplasm. It carries out the reaction 7-aminomethyl-7-carbaguanosine(34) in tRNA + S-adenosyl-L-methionine = epoxyqueuosine(34) in tRNA + adenine + L-methionine + 2 H(+). It participates in tRNA modification; tRNA-queuosine biosynthesis. Transfers and isomerizes the ribose moiety from AdoMet to the 7-aminomethyl group of 7-deazaguanine (preQ1-tRNA) to give epoxyqueuosine (oQ-tRNA). The polypeptide is S-adenosylmethionine:tRNA ribosyltransferase-isomerase (Clostridium tetani (strain Massachusetts / E88)).